The sequence spans 199 residues: MKIGDVEVRDDVFNVKVKKHVLWEVVKWQLAKRRQGTHSTKTRGEVAYSGRKILPQKGTGNARHGERGVNIFVGGGVAHGPKPRDYEYPLPKRVRKLGLKMALSDKARNNAIIFVDNIDLGKKPKTKKAIEFLKNLGVEKEKVLVVIPEKADVLYKSFRNLPNVRVLLPEGLNVYDVLWANKLVIQKDCLDRIYKKVEA.

Belongs to the universal ribosomal protein uL4 family. In terms of assembly, part of the 50S ribosomal subunit.

In terms of biological role, one of the primary rRNA binding proteins, this protein initially binds near the 5'-end of the 23S rRNA. It is important during the early stages of 50S assembly. It makes multiple contacts with different domains of the 23S rRNA in the assembled 50S subunit and ribosome. Its function is as follows. Forms part of the polypeptide exit tunnel. The chain is Large ribosomal subunit protein uL4 from Aquifex aeolicus (strain VF5).